The sequence spans 131 residues: Sec-independent protein translocase protein TatB (131 aa).

A helical membrane pass occupies residues 2-22; it reads FANIGWGEMLVLVMVGLVVLG. Positions 90-131 are disordered; that stretch reads DSLFTGDFDRPTPKKPDAAGSAGPDATEQIGAGPIPFDSDAT. Basic and acidic residues predominate over residues 96 to 106; sequence DFDRPTPKKPD.

This sequence belongs to the TatB family. In terms of assembly, the Tat system comprises two distinct complexes: a TatABC complex, containing multiple copies of TatA, TatB and TatC subunits, and a separate TatA complex, containing only TatA subunits. Substrates initially bind to the TatABC complex, which probably triggers association of the separate TatA complex to form the active translocon.

Its subcellular location is the cell membrane. Part of the twin-arginine translocation (Tat) system that transports large folded proteins containing a characteristic twin-arginine motif in their signal peptide across membranes. Together with TatC, TatB is part of a receptor directly interacting with Tat signal peptides. TatB may form an oligomeric binding site that transiently accommodates folded Tat precursor proteins before their translocation. This chain is Sec-independent protein translocase protein TatB, found in Mycobacterium bovis (strain ATCC BAA-935 / AF2122/97).